Here is a 364-residue protein sequence, read N- to C-terminus: Geranylgeranyl pyrophosphate synthase janG (364 aa).

Isopentenyl diphosphate contacts are provided by Lys-83, Arg-86, and His-115. The Mg(2+) site is built by Asp-122 and Asp-126. Residue Arg-131 coordinates dimethylallyl diphosphate. Arg-132 contributes to the isopentenyl diphosphate binding site. Dimethylallyl diphosphate-binding residues include Lys-209, Thr-210, and Gln-243. Asp-246 provides a ligand contact to Mg(2+). Dimethylallyl diphosphate is bound by residues Asn-250, Lys-260, and Lys-270.

The protein belongs to the FPP/GGPP synthase family. The cofactor is Mg(2+).

It catalyses the reaction isopentenyl diphosphate + dimethylallyl diphosphate = (2E)-geranyl diphosphate + diphosphate. The catalysed reaction is isopentenyl diphosphate + (2E)-geranyl diphosphate = (2E,6E)-farnesyl diphosphate + diphosphate. It carries out the reaction isopentenyl diphosphate + (2E,6E)-farnesyl diphosphate = (2E,6E,10E)-geranylgeranyl diphosphate + diphosphate. The protein operates within secondary metabolite biosynthesis. In terms of biological role, geranylgeranyl pyrophosphate synthase; part of the gene cluster that mediates the biosynthesis of the indole diterpenes janthitremanes such as shearinine K or shearinine A. The geranylgeranyl diphosphate (GGPP) synthase janG catalyzes the first step in janthitremane biosynthesis via conversion of farnesyl pyrophosphate and isopentyl pyrophosphate into geranylgeranyl pyrophosphate (GGPP). Condensation of indole-3-glycerol phosphate with GGPP by the prenyl transferase janC then forms 3-geranylgeranylindole (3-GGI). Epoxidation by the FAD-dependent monooxygenase janM leads to a epoxidized-GGI that is substrate of the terpene cyclase janB for cyclization to yield paspaline. Paspaline is subsequently converted to 13-desoxypaspaline by the cytochrome P450 monooxygenase janP, via beta-PC-M6 in a series of alpha-face oxidations. The cytochrome P450 monooxygenase janQ is proposed to carry out sequential beta-face oxidation steps at C-7 and C-13 of 13-desoxypaspaline to form paspalicine and paspalinine respectively. The indole diterpene prenyltransferase janD may then convert paspalinine into shearinine K which is substrate of janO and/or additional enzymes for oxidation and cyclization to generate shearinine A. This Penicillium janthinellum (Penicillium vitale) protein is Geranylgeranyl pyrophosphate synthase janG.